Here is a 304-residue protein sequence, read N- to C-terminus: tRNA pseudouridine synthase B (304 aa).

The active-site Nucleophile is Asp38.

It belongs to the pseudouridine synthase TruB family. Type 1 subfamily.

It catalyses the reaction uridine(55) in tRNA = pseudouridine(55) in tRNA. Functionally, responsible for synthesis of pseudouridine from uracil-55 in the psi GC loop of transfer RNAs. The polypeptide is tRNA pseudouridine synthase B (Listeria welshimeri serovar 6b (strain ATCC 35897 / DSM 20650 / CCUG 15529 / CIP 8149 / NCTC 11857 / SLCC 5334 / V8)).